Reading from the N-terminus, the 521-residue chain is Probable protein kinase UbiB (521 aa).

In terms of domain architecture, Protein kinase spans 119–497; it reads SFEREPVASA…QKLTNRLLQA (379 aa). ATP-binding positions include 125 to 133 and K151; that span reads VASASIAQV. Catalysis depends on D286, which acts as the Proton acceptor. A helical transmembrane segment spans residues 496 to 516; the sequence is QAIVSAGIGFVIALILLQLVV.

It belongs to the ABC1 family. UbiB subfamily.

The protein localises to the cell inner membrane. The protein operates within cofactor biosynthesis; ubiquinone biosynthesis [regulation]. Is probably a protein kinase regulator of UbiI activity which is involved in aerobic coenzyme Q (ubiquinone) biosynthesis. This is Probable protein kinase UbiB from Delftia acidovorans (strain DSM 14801 / SPH-1).